We begin with the raw amino-acid sequence, 292 residues long: NAD kinase (292 aa).

Asp-73 serves as the catalytic Proton acceptor. NAD(+) contacts are provided by residues 73-74 (DG), 147-148 (NE), His-158, Arg-175, Asp-177, 188-193 (TAYSLS), and Gln-247.

This sequence belongs to the NAD kinase family. A divalent metal cation is required as a cofactor.

The protein localises to the cytoplasm. The catalysed reaction is NAD(+) + ATP = ADP + NADP(+) + H(+). Functionally, involved in the regulation of the intracellular balance of NAD and NADP, and is a key enzyme in the biosynthesis of NADP. Catalyzes specifically the phosphorylation on 2'-hydroxyl of the adenosine moiety of NAD to yield NADP. This chain is NAD kinase, found in Shigella boydii serotype 4 (strain Sb227).